A 41-amino-acid polypeptide reads, in one-letter code: Disintegrin viperistatin (41 aa).

Intrachain disulfides connect Cys1/Cys10, Cys6/Cys29, Cys7/Cys34, and Cys19/Cys36. Residues 1 to 41 enclose the Disintegrin domain; that stretch reads CTTGPCCRQCKLKPAGTTCWKTSRTSHYCTGKSCDCPVYQG. The Cell attachment site; atypical (KTS) motif lies at 21-23; sequence KTS.

Monomer. In terms of tissue distribution, expressed by the venom gland.

It localises to the secreted. Potent and highly selective inhibitor of alpha-1/beta-1 (ITGA1/ITGB1) integrin binding to collagen I and IV. Is about 25-fold more potent than obtustatin inhibiting the binding of this integrin to collagen IV. This Daboia palaestinae (Palestine viper) protein is Disintegrin viperistatin.